The chain runs to 354 residues: AT-hook motif nuclear-localized protein 11 (354 aa).

Disordered stretches follow at residues 1 to 158 (MDRR…MMPS) and 290 to 354 (KREE…LMRG). 2 stretches are compositionally biased toward low complexity: residues 46 to 55 (NSISPFGSNP) and 75 to 96 (VDSSPADSSAAAAGALVAPPSG). The Bipartite nuclear localization signal motif lies at 101–109 (KRKRGRPRK). Positions 101 to 113 (KRKRGRPRKYGQD) form a DNA-binding region, a.T hook 1. Residues 122 to 133 (SPSISNVSPNSN) show a composition bias toward low complexity. The a.T hook 2 DNA-binding region spans 134–146 (KRGRGRPPGSGKK). In terms of domain architecture, PPC spans 159–302 (STGMSFTPHV…ETSEDVQDTD (144 aa)). Positions 294–303 (TSEDVQDTDA) are enriched in acidic residues. Positions 304–327 (LENNNDNTAATSPPVPQQSQNIVQ) are enriched in polar residues. Positions 340–354 (MDMHHPHMDIDLMRG) are enriched in basic and acidic residues.

The protein resides in the nucleus. Functionally, transcription factor that specifically binds AT-rich DNA sequences related to the nuclear matrix attachment regions (MARs). The polypeptide is AT-hook motif nuclear-localized protein 11 (Arabidopsis thaliana (Mouse-ear cress)).